Here is a 329-residue protein sequence, read N- to C-terminus: MEFNDMTSDITGGVKEYDIATNGISLHVTEQGAGPAVLFCHGFPDTSYTWRRQMNAIASAGYRAIAPDMRGYGRSSAPADASLYTPLHTTGDLIGLLDALKISSAVLVGHDWGATHAWNAALMRPDRFKAVFGLSVPFVTRGESSVFERMRESGRQDDFYMFEQIRPDADQIWADAAVTIPGILYWASGSAPEGEQWSPLDRTRSLYRAAPGPLPSWAEADYVAHNIAEFRRTGFHGGLNYYRAAEPYFTLSAPWKGAKITQPSFFIWGKSDGLKELYPFTLQQMRAGLPGLMGGLELDNVGHWVQHEASAEVSEQLVRFLRTVDAVLS.

Residues Pro35 to Glu308 enclose the AB hydrolase-1 domain. Residue Asp111 is the Nucleophile of the active site. Residue Tyr242 is the Proton donor of the active site. The active-site Proton acceptor is the His303.

This sequence belongs to the AB hydrolase superfamily. Epoxide hydrolase family. In terms of assembly, homodimer.

It catalyses the reaction an epoxide + H2O = an ethanediol. It carries out the reaction (R)-styrene oxide + H2O = (R)-styrene glycol. The catalysed reaction is (S)-styrene oxide + H2O = (S)-styrene glycol. The enzyme catalyses 3,4-epoxy-1-cyclohexene + H2O = cyclohex-3-ene-1,2-diol. Its function is as follows. Catalyzes the hydrolysis of various epoxides into diols. In vitro, shows the strongest activity toward aromatic and cyclic aliphatic epoxide compounds, since it shows strong activity toward (R)-styrene oxide, (S)-styrene oxide, and 3,4-epoxy-1-cyclohexene, but very weak activity toward (R)-epichlorohydrin, (S)-epichlorohydrin, and 1,2-epoxy-9-decene. The sequence is that of Epoxide hydrolase from Caballeronia sordidicola (Burkholderia sordidicola).